The chain runs to 376 residues: Chaperone protein DnaJ (376 aa).

A J domain is found at 5-72; it reads DFYEVLGVPK…QKRAAYDQYG (68 aa). The CR-type zinc finger occupies 136–214; it reads GKEAQIRIPS…CHGQGRVKKQ (79 aa). Zn(2+)-binding residues include C149, C152, C166, C169, C188, C191, C202, and C205. 4 CXXCXGXG motif repeats span residues 149–156, 166–173, 188–195, and 202–209; these read CETCHGSG, CGTCQGSG, CPHCRGTG, and CTACHGQG. Disordered stretches follow at residues 227 to 246 and 354 to 376; these read DGMR…GGPP and KKGG…SFFS. Residues 237-246 are compositionally biased toward gly residues; sequence GEPGTNGGPP. The span at 367–376 shows a compositional bias: basic and acidic residues; that stretch reads WTDRLKSFFS.

This sequence belongs to the DnaJ family. Homodimer. The cofactor is Zn(2+).

It localises to the cytoplasm. Its function is as follows. Participates actively in the response to hyperosmotic and heat shock by preventing the aggregation of stress-denatured proteins and by disaggregating proteins, also in an autonomous, DnaK-independent fashion. Unfolded proteins bind initially to DnaJ; upon interaction with the DnaJ-bound protein, DnaK hydrolyzes its bound ATP, resulting in the formation of a stable complex. GrpE releases ADP from DnaK; ATP binding to DnaK triggers the release of the substrate protein, thus completing the reaction cycle. Several rounds of ATP-dependent interactions between DnaJ, DnaK and GrpE are required for fully efficient folding. Also involved, together with DnaK and GrpE, in the DNA replication of plasmids through activation of initiation proteins. The protein is Chaperone protein DnaJ of Acidovorax ebreus (strain TPSY) (Diaphorobacter sp. (strain TPSY)).